Here is a 353-residue protein sequence, read N- to C-terminus: Putative permease PerM (353 aa).

Helical transmembrane passes span 19–39, 72–92, 156–176, 217–237, 240–260, 281–301, and 310–330; these read IALL…SGLL, IVLV…LPIA, LVGL…VFFL, VLEM…FGLN, LLLA…AFVV, CFAV…PVLF, and LVII…GVFF.

It belongs to the autoinducer-2 exporter (AI-2E) (TC 2.A.86) family.

It is found in the cell membrane. This is Putative permease PerM (perM) from Escherichia coli O157:H7.